The chain runs to 353 residues: O-antigen chain mannosyltransferase RfbU (353 aa).

This sequence belongs to the glycosyltransferase group 1 family. Glycosyltransferase 4 subfamily.

The catalysed reaction is alpha-L-rhamnosyl-(1-&gt;3)-alpha-D-galactosyl-1-diphospho-di-trans,octa-cis-undecaprenol + GDP-alpha-D-mannose = alpha-D-Man-(1-&gt;4)-alpha-L-Rha-(1-&gt;3)-alpha-D-Gal-di-trans,octa-cis-undecaprenyl diphosphate + GDP + H(+). The protein operates within bacterial outer membrane biogenesis; LPS O-antigen biosynthesis. In terms of biological role, mannosyltransferase involved in the biosynthesis of the repeat unit of the lipopolysaccharide (LPS) O-antigen region. Catalyzes the addition of a mannose to the rhamnosyl-galactosyl-undecaprenyl diphosphate intermediate. This is O-antigen chain mannosyltransferase RfbU from Salmonella typhimurium (strain LT2 / SGSC1412 / ATCC 700720).